An 802-amino-acid chain; its full sequence is Phenylalanine--tRNA ligase beta subunit (802 aa).

The region spanning 39–154 (AEGLSKLVVG…EDAVPGDSIF (116 aa)) is the tRNA-binding domain. Residues 407 to 482 (TEPVQVSTSL…RIYGYEKLPT (76 aa)) form the B5 domain. Residues Asp460, Asp466, Glu469, and Glu470 each contribute to the Mg(2+) site. In terms of domain architecture, FDX-ACB spans 709–802 (TKFPAVSRDI…LTEKVEAEVR (94 aa)).

This sequence belongs to the phenylalanyl-tRNA synthetase beta subunit family. Type 1 subfamily. In terms of assembly, tetramer of two alpha and two beta subunits. The cofactor is Mg(2+).

The protein localises to the cytoplasm. It catalyses the reaction tRNA(Phe) + L-phenylalanine + ATP = L-phenylalanyl-tRNA(Phe) + AMP + diphosphate + H(+). The polypeptide is Phenylalanine--tRNA ligase beta subunit (Streptococcus thermophilus (strain CNRZ 1066)).